The sequence spans 250 residues: Large ribosomal subunit protein uL4 (250 aa).

Disordered stretches follow at residues Met1 to Arg20 and Tyr51 to Asp101. Positions Pro92 to Asp101 are enriched in basic and acidic residues.

The protein belongs to the universal ribosomal protein uL4 family. Part of the 50S ribosomal subunit.

Its function is as follows. One of the primary rRNA binding proteins, this protein initially binds near the 5'-end of the 23S rRNA. It is important during the early stages of 50S assembly. It makes multiple contacts with different domains of the 23S rRNA in the assembled 50S subunit and ribosome. In terms of biological role, forms part of the polypeptide exit tunnel. The chain is Large ribosomal subunit protein uL4 from Halobacterium salinarum (strain ATCC 29341 / DSM 671 / R1).